The primary structure comprises 684 residues: Probable potassium transport system protein Kup (684 aa).

A run of 12 helical transmembrane segments spans residues 19–39 (ALLV…LYVM), 61–81 (VSLI…LIAL), 104–124 (WLVL…MLTP), 151–171 (QVIW…RFGT), 177–197 (AFGP…FIAL), 223–243 (MGLF…ALYS), 255–275 (LSWP…AVWL), 303–323 (LGAI…LISG), 352–372 (LYIP…IGYF), 381–401 (AYGL…YQYL), 407–427 (PAVI…VFFI), and 433–453 (FLHG…VMYV).

Belongs to the HAK/KUP transporter (TC 2.A.72) family.

The protein localises to the cell membrane. The catalysed reaction is K(+)(in) + H(+)(in) = K(+)(out) + H(+)(out). Its function is as follows. Transport of potassium into the cell. Likely operates as a K(+):H(+) symporter. This chain is Probable potassium transport system protein Kup, found in Lacticaseibacillus casei (strain BL23) (Lactobacillus casei).